Reading from the N-terminus, the 353-residue chain is Replication factor C subunit 2 (353 aa).

The residue at position 1 (Met1) is an N-acetylmethionine. Residues Val28, Arg32, 65-73, Asn171, and Arg229 contribute to the ATP site; that span reads GPPGTGKTS.

This sequence belongs to the activator 1 small subunits family. In terms of assembly, replication factor C (RFC) is a heteropentamer of subunits RFC1, RFC2, RFC3, RFC4 and RFC5 and forms a complex with POL30/PCNA in the presence of ATP. Component of the RAD24-RFC complex which consists of RAD14, RFC2, RFC3, RFC4 and RFC5 and associates with the checkpoint clamp DDC1:MEC3:RAD17 complex. Component of the ELG1-RFC complex which consists of ELG1, RFC2, RFC3, RFC4 and RFC5. Component of the CTF18-RFC complex, which consists of CTF18, CTF8, DCC1, RFC2, RFC3, RFC4 and RFC5. RFC2 interacts with ECO1.

It is found in the nucleus. Functionally, component of ATP-dependent clamp loader (RFC and RFC-like) complexes for DNA clamps, such as the POL30/PCNA homotrimer and the checkpoint clamp DDC1:MEC3:RAD17 complex. During a clamp loading circle, the RFC:clamp complex binds to DNA and the recognition of the double-stranded/single-stranded junction stimulates ATP hydrolysis by RFC. The complex presumably provides bipartite ATP sites in which one subunit supplies a catalytic site for hydrolysis of ATP bound to the neighboring subunit. Dissociation of RFC from the clamp leaves the clamp encircling DNA. Component of the replication factor C (RFC or activator 1) complex which loads POL30/PCNA and acts during elongation of primed DNA templates by DNA polymerase delta and epsilon. RFC has an essential but redundant activity in sister chromatid cohesion establishment. Component of the RFC-like complex CTF18-RFC which is required for efficient establishment of chromosome cohesion during S-phase and may load or unload POL30/PCNA. Component of the RFC-like RAD24-RFC complex which loads the checkpoint clamp DDC1:MEC3:RAD17 complex and is involved in DNA repair pathways. Component of the RFC-like ELG1-RFC complex which appears to have a role in DNA replication, replication fork re-start, recombination and repair. RFC2 binds ATP and single-stranded DNA. This Saccharomyces cerevisiae (strain ATCC 204508 / S288c) (Baker's yeast) protein is Replication factor C subunit 2 (RFC2).